We begin with the raw amino-acid sequence, 113 residues long: Ig kappa chain V-II region 17S29.1 (113 aa).

The framework-1 stretch occupies residues 1 to 23; that stretch reads DIVMTQAVFSNPVTLGTSASISC. The cysteines at positions 23 and 93 are disulfide-linked. The interval 24 to 39 is complementarity-determining-1; sequence RSSKSLLHSNGITYLY. Positions 40-54 are framework-2; sequence WYLQKPGQSPQLLLY. Residues 55–61 form a complementarity-determining-2 region; the sequence is QMSNLAS. Positions 62 to 93 are framework-3; sequence GVPDRFSSSGSGTDFTLRISRVEAEDVGVYYC. The complementarity-determining-3 stretch occupies residues 94–102; that stretch reads AHNLELPYT. A framework-4 region spans residues 103–112; sequence FGGGTKLEIK.

Its function is as follows. Anti-streptococcal group A carbohydrate antibody. This chain is Ig kappa chain V-II region 17S29.1, found in Mus musculus (Mouse).